A 672-amino-acid chain; its full sequence is Outer dynein arm-docking complex subunit 4 (672 aa).

TPR repeat units follow at residues 13–46 (FPSY…QDGD), 48–80 (NCLV…DPAF), 81–114 (CKGI…RPDR), 275–311 (LKSL…NKEE), 320–353 (GNLY…AKEY), 360–393 (SRAL…AKTT), 397–430 (TWLF…AEEE), and 437–470 (LNAS…AKLV). The span at 527-544 (RVRDEPEKVVKQWDHSED) shows a compositional bias: basic and acidic residues. Residues 527 to 672 (RVRDEPEKVV…TGNEMEKEYE (146 aa)) form a disordered region. Residues 545-555 (EKETDEDDEAF) are compositionally biased toward acidic residues. 2 stretches are compositionally biased toward basic and acidic residues: residues 595 to 650 (ETGR…EELG) and 658 to 672 (GETK…KEYE).

In terms of assembly, component of the outer dynein arm-docking complex along with ODAD1, ODAD2 and ODAD3. Interacts with ODAD1; this interaction may facilitate the recruitment and/or attachment of outer dynein arm docking complex proteins, including ODAD1, ODAD3 and ODAD2, to ciliary axonemes. Interacts with components of the IFT complex A, including IFT140, TTC21B/IFT139 and WDR19/IFT144, and the IFT complex B, including IFT46, IFT52 and IFT57. Interacts with CFAP53. Expressed in the nasal mucosa (at protein level).

The protein resides in the cytoplasm. It localises to the cytoskeleton. The protein localises to the cilium axoneme. Component of the outer dynein arm-docking complex (ODA-DC) that mediates outer dynein arms (ODA) binding onto the doublet microtubule. Plays an essential role for the assembly of ODA-DC and for the docking of ODA in ciliary axoneme. The sequence is that of Outer dynein arm-docking complex subunit 4 from Homo sapiens (Human).